A 197-amino-acid polypeptide reads, in one-letter code: 3-isopropylmalate dehydratase small subunit (197 aa).

The protein belongs to the LeuD family. LeuD type 1 subfamily. As to quaternary structure, heterodimer of LeuC and LeuD.

The enzyme catalyses (2R,3S)-3-isopropylmalate = (2S)-2-isopropylmalate. Its pathway is amino-acid biosynthesis; L-leucine biosynthesis; L-leucine from 3-methyl-2-oxobutanoate: step 2/4. In terms of biological role, catalyzes the isomerization between 2-isopropylmalate and 3-isopropylmalate, via the formation of 2-isopropylmaleate. The chain is 3-isopropylmalate dehydratase small subunit from Azobacteroides pseudotrichonymphae genomovar. CFP2.